Here is a 461-residue protein sequence, read N- to C-terminus: V-type ATP synthase beta chain (461 aa).

It belongs to the ATPase alpha/beta chains family.

In terms of biological role, produces ATP from ADP in the presence of a proton gradient across the membrane. The V-type beta chain is a regulatory subunit. This Clostridium botulinum (strain ATCC 19397 / Type A) protein is V-type ATP synthase beta chain.